The primary structure comprises 170 residues: Large ribosomal subunit protein uL15 (170 aa).

Over residues 1-12 (MKLHDLRPAEGA) the composition is skewed to basic and acidic residues. Positions 1–52 (MKLHDLRPAEGAHRKRKRIGRGHGSGKGKTGGKGMMGQKARSGPGPYRTFEG) are disordered. The segment covering 13–26 (HRKRKRIGRGHGSG) has biased composition (basic residues).

It belongs to the universal ribosomal protein uL15 family. Part of the 50S ribosomal subunit.

Binds to the 23S rRNA. This Chloroflexus aurantiacus (strain ATCC 29366 / DSM 635 / J-10-fl) protein is Large ribosomal subunit protein uL15.